The sequence spans 396 residues: Tryptophan synthase beta chain (396 aa).

Position 86 is an N6-(pyridoxal phosphate)lysine (lysine 86).

It belongs to the TrpB family. As to quaternary structure, tetramer of two alpha and two beta chains. Pyridoxal 5'-phosphate serves as cofactor.

The catalysed reaction is (1S,2R)-1-C-(indol-3-yl)glycerol 3-phosphate + L-serine = D-glyceraldehyde 3-phosphate + L-tryptophan + H2O. Its pathway is amino-acid biosynthesis; L-tryptophan biosynthesis; L-tryptophan from chorismate: step 5/5. The beta subunit is responsible for the synthesis of L-tryptophan from indole and L-serine. In Photobacterium profundum (strain SS9), this protein is Tryptophan synthase beta chain.